Here is a 474-residue protein sequence, read N- to C-terminus: Dihydrolipoyl dehydrogenase (474 aa).

FAD contacts are provided by residues 34 to 42 (EKEKLGGTC), lysine 51, and glycine 114. Cysteine 42 and cysteine 47 are oxidised to a cystine. NAD(+) contacts are provided by residues 188–192 (GGGVI), glutamate 211, valine 245, and 278–281 (SIGR). FAD is bound by residues aspartate 320 and alanine 328. Residue histidine 453 is the Proton acceptor of the active site.

The protein belongs to the class-I pyridine nucleotide-disulfide oxidoreductase family. Homodimer. FAD serves as cofactor.

The protein localises to the cytoplasm. It catalyses the reaction N(6)-[(R)-dihydrolipoyl]-L-lysyl-[protein] + NAD(+) = N(6)-[(R)-lipoyl]-L-lysyl-[protein] + NADH + H(+). Its function is as follows. The branched-chain alpha-keto dehydrogenase complex catalyzes the overall conversion of alpha-keto acids to acyl-CoA and CO(2). It contains multiple copies of 3 enzymatic components: branched-chain alpha-keto acid decarboxylase (E1), lipoamide acyltransferase (E2) and lipoamide dehydrogenase (E3). This chain is Dihydrolipoyl dehydrogenase (bfmBC), found in Bacillus subtilis (strain 168).